A 45-amino-acid chain; its full sequence is Osteocalcin (45 aa).

The Gla domain occupies 1–44 (AGTAXGDLTPFQLESLREVCEVNLACEHMADTXGIVAAYTAYYG). The Ca(2+) site is built by Glu-14, Glu-18, Glu-21, and Glu-27. 3 positions are modified to 4-carboxyglutamate: Glu-14, Glu-18, and Glu-21. Residues Cys-20 and Cys-26 are joined by a disulfide bond.

The protein belongs to the osteocalcin/matrix Gla protein family. Gamma-carboxyglutamate residues are formed by vitamin K dependent carboxylation by GGCX. These residues are essential for the binding of calcium.

The protein localises to the secreted. The carboxylated form is one of the main organic components of the bone matrix, which constitutes 1-2% of the total bone protein. The carboxylated form binds strongly to apatite and calcium. The chain is Osteocalcin (bglap) from Danio rerio (Zebrafish).